Consider the following 110-residue polypeptide: Small ribosomal subunit protein bS16 (110 aa).

Residues 81–104 (VRPAEVLGKQKQEKERSAKKKDAA) are compositionally biased toward basic and acidic residues. Positions 81 to 110 (VRPAEVLGKQKQEKERSAKKKDAAASETSE) are disordered.

The protein belongs to the bacterial ribosomal protein bS16 family.

This Prochlorococcus marinus (strain NATL2A) protein is Small ribosomal subunit protein bS16.